The primary structure comprises 20 residues: FLPIIAGMAAKVICAITKKC.

Cys-14 and Cys-20 are oxidised to a cystine.

In terms of tissue distribution, expressed by the skin glands.

It is found in the secreted. Its function is as follows. Antimicrobial peptide with activity against Gram-negative and Gram-positive bacteria (MIC=50 uM against E.coli, MIC=6 uM against S.aureus) and fungi (MIC=13 uM against C.albicans). Shows hemolytic activity on human erythrocytes (HC(50)=25 uM). The protein is Brevinin-1SPb of Lithobates septentrionalis (Mink frog).